Consider the following 145-residue polypeptide: Leghemoglobin (145 aa).

A Globin domain is found at 3-145 (GFTEKQEALV…ELAAALKKAF (143 aa)). Residues Tyr26 and Tyr31 each carry the nitrated tyrosine modification. His62 is an O2 binding site. Heme b-binding residues include Lys65, His93, and Lys96. Tyr134 bears the Nitrated tyrosine mark.

This sequence belongs to the plant globin family. In terms of assembly, monomer. In terms of processing, nitrated in effective nodules and particularly in hypoxic conditions; this mechanism may play a protective role in the symbiosis by buffering toxic peroxynitrite NO(2)(-). Nitration level decrease during nodule senescence. In terms of tissue distribution, root nodules.

It localises to the cytoplasm. Its subcellular location is the cytosol. It is found in the nucleus. Its function is as follows. Leghemoglobin that reversibly binds oxygen O(2) through a pentacoordinated heme iron. In root nodules, facilitates the diffusion of oxygen to the bacteroids while preventing the bacterial nitrogenase from being inactivated by buffering dioxygen, nitric oxide and carbon monoxide, and promoting the formation of reactive oxygen species (ROS, e.g. H(2)O(2)). This role is essential for symbiotic nitrogen fixation (SNF). The sequence is that of Leghemoglobin from Psophocarpus tetragonolobus (Winged bean).